We begin with the raw amino-acid sequence, 325 residues long: Beta-ketoacyl-[acyl-carrier-protein] synthase III (325 aa).

Residues Cys-119 and His-252 contribute to the active site. The ACP-binding stretch occupies residues 253 to 257 (QANIR). Asn-282 is a catalytic residue.

It belongs to the thiolase-like superfamily. FabH family. In terms of assembly, homodimer.

Its subcellular location is the cytoplasm. It catalyses the reaction malonyl-[ACP] + acetyl-CoA + H(+) = 3-oxobutanoyl-[ACP] + CO2 + CoA. Its pathway is lipid metabolism; fatty acid biosynthesis. Functionally, catalyzes the condensation reaction of fatty acid synthesis by the addition to an acyl acceptor of two carbons from malonyl-ACP. Catalyzes the first condensation reaction which initiates fatty acid synthesis and may therefore play a role in governing the total rate of fatty acid production. Possesses both acetoacetyl-ACP synthase and acetyl transacylase activities. Its substrate specificity determines the biosynthesis of branched-chain and/or straight-chain of fatty acids. This Paracidovorax citrulli (strain AAC00-1) (Acidovorax citrulli) protein is Beta-ketoacyl-[acyl-carrier-protein] synthase III.